We begin with the raw amino-acid sequence, 200 residues long: ATP-dependent Clp protease proteolytic subunit (200 aa).

Ser105 serves as the catalytic Nucleophile. His130 is an active-site residue.

Belongs to the peptidase S14 family. As to quaternary structure, fourteen ClpP subunits assemble into 2 heptameric rings which stack back to back to give a disk-like structure with a central cavity, resembling the structure of eukaryotic proteasomes.

The protein localises to the cytoplasm. The enzyme catalyses Hydrolysis of proteins to small peptides in the presence of ATP and magnesium. alpha-casein is the usual test substrate. In the absence of ATP, only oligopeptides shorter than five residues are hydrolyzed (such as succinyl-Leu-Tyr-|-NHMec, and Leu-Tyr-Leu-|-Tyr-Trp, in which cleavage of the -Tyr-|-Leu- and -Tyr-|-Trp bonds also occurs).. Cleaves peptides in various proteins in a process that requires ATP hydrolysis. Has a chymotrypsin-like activity. Plays a major role in the degradation of misfolded proteins. This chain is ATP-dependent Clp protease proteolytic subunit, found in Hydrogenovibrio crunogenus (strain DSM 25203 / XCL-2) (Thiomicrospira crunogena).